Reading from the N-terminus, the 417-residue chain is Neuropeptide FF receptor 2 (417 aa).

Residues 1-45 (MSEKWDSNSSESWNHIWSGNDTQHHWYSDINITYVNYYLHQPQVA) are Extracellular-facing. Residues N8, N20, and N31 are each glycosylated (N-linked (GlcNAc...) asparagine). A helical membrane pass occupies residues 46 to 66 (AVFISSYLLIFVLCMVGNTVV). Topologically, residues 67–82 (CFIVIRNRHMHTVTNF) are cytoplasmic. A helical membrane pass occupies residues 83–103 (FILNLAISDLLVGIFCMPITL). Residues 104 to 119 (LDNIIAGWPFGSSMCK) are Extracellular-facing. A disulfide bridge links C118 with C206. Residues 120-140 (ISGLVQGISVAASVFTLVAIA) form a helical membrane-spanning segment. The Cytoplasmic segment spans residues 141 to 160 (VDRFRCVVYPFKPKLTVKTA). A helical transmembrane segment spans residues 161–181 (FVTIVIIWGLAIAIMTPSAIM). Topologically, residues 182 to 217 (LHVQEEKYYRVRLSSHNKTSTVYWCREDWPRHEMRR) are extracellular. N-linked (GlcNAc...) asparagine glycosylation occurs at N198. A helical transmembrane segment spans residues 218–238 (IYTTVLFATIYLAPLSLIVIM). Residues 239–274 (YARIGASLFKTAAHCTGKQRPVQWHVSKKKQKVIKM) are Cytoplasmic-facing. A helical transmembrane segment spans residues 275–295 (LLTVALLFILSWLPLWTLMML). Residues 296 to 310 (SDYTDLSPNKLRIIN) lie on the Extracellular side of the membrane. Residues 311-331 (IYIYPFAHWLAFCNSSVNPII) traverse the membrane as a helical segment. Topologically, residues 332 to 417 (YGFFNENFRN…MGEATNSTVA (86 aa)) are cytoplasmic. Residues 382–401 (SQNPGGENLGCGKSADNPTQ) form a disordered region.

Belongs to the G-protein coupled receptor 1 family.

The protein localises to the cell membrane. Receptor for NPAF (A-18-F-amide) and NPFF (F-8-F-amide) neuropeptides, also known as morphine-modulating peptides. Can also be activated by a variety of naturally occurring or synthetic FMRF-amide like ligands. This receptor mediates its action by association with G proteins that activate a phosphatidylinositol-calcium second messenger system. The sequence is that of Neuropeptide FF receptor 2 (Npffr2) from Mus musculus (Mouse).